We begin with the raw amino-acid sequence, 480 residues long: tRNA-2-methylthio-N(6)-dimethylallyladenosine synthase (480 aa).

One can recognise an MTTase N-terminal domain in the interval 32–149; it reads RKLYIRTFGC…LPELIRRRRA (118 aa). [4Fe-4S] cluster is bound by residues cysteine 41, cysteine 78, cysteine 112, cysteine 186, cysteine 190, and cysteine 193. One can recognise a Radical SAM core domain in the interval 172–405; it reads RIEGATAFVS…QALINAQAAA (234 aa). A TRAM domain is found at 408-471; sequence QAMVGTRQRL…PNSLRARVAD (64 aa).

Belongs to the methylthiotransferase family. MiaB subfamily. Monomer. [4Fe-4S] cluster serves as cofactor.

It localises to the cytoplasm. It carries out the reaction N(6)-dimethylallyladenosine(37) in tRNA + (sulfur carrier)-SH + AH2 + 2 S-adenosyl-L-methionine = 2-methylsulfanyl-N(6)-dimethylallyladenosine(37) in tRNA + (sulfur carrier)-H + 5'-deoxyadenosine + L-methionine + A + S-adenosyl-L-homocysteine + 2 H(+). Catalyzes the methylthiolation of N6-(dimethylallyl)adenosine (i(6)A), leading to the formation of 2-methylthio-N6-(dimethylallyl)adenosine (ms(2)i(6)A) at position 37 in tRNAs that read codons beginning with uridine. In Bordetella petrii (strain ATCC BAA-461 / DSM 12804 / CCUG 43448), this protein is tRNA-2-methylthio-N(6)-dimethylallyladenosine synthase.